The sequence spans 443 residues: Probable glycine dehydrogenase (decarboxylating) subunit 1 (443 aa).

Belongs to the GcvP family. N-terminal subunit subfamily. As to quaternary structure, the glycine cleavage system is composed of four proteins: P, T, L and H. In this organism, the P 'protein' is a heterodimer of two subunits.

It catalyses the reaction N(6)-[(R)-lipoyl]-L-lysyl-[glycine-cleavage complex H protein] + glycine + H(+) = N(6)-[(R)-S(8)-aminomethyldihydrolipoyl]-L-lysyl-[glycine-cleavage complex H protein] + CO2. Its function is as follows. The glycine cleavage system catalyzes the degradation of glycine. The P protein binds the alpha-amino group of glycine through its pyridoxal phosphate cofactor; CO(2) is released and the remaining methylamine moiety is then transferred to the lipoamide cofactor of the H protein. In Endomicrobium trichonymphae, this protein is Probable glycine dehydrogenase (decarboxylating) subunit 1.